Reading from the N-terminus, the 349-residue chain is Trans-enoyl reductase phmE (349 aa).

Position 55-58 (55-58 (CDWK)) interacts with NADP(+). 143 to 150 (TGIGTMGL) serves as a coordination point for substrate. Residues 182–185 (SPKN), Tyr-200, and 247–248 (LE) contribute to the NADP(+) site. Residue 267–271 (GMAIL) participates in substrate binding. 336-337 (VS) lines the NADP(+) pocket.

The protein belongs to the zinc-containing alcohol dehydrogenase family. As to quaternary structure, monomer.

Its pathway is mycotoxin biosynthesis. Trans-enoyl reductase; part of the gene cluster that mediates the biosynthesis of the mycotoxins phomacins, leucine-derived cytochalasans with potent actin polymerization-inhibitory activities and monocot-specific antigerminative activities. The first step in the pathway is catalyzed by the hybrid PKS-NRPS phmA, assisted by the enoyl reductase phmE, that are responsible for fusion of the leucine precursor and the polyketide backbone to produce a 2-pyrrolidone intermediate. The polyketide synthase module (PKS) of phmA is responsible for the synthesis of the polyketide backbone and the downstream nonribosomal peptide synthetase (NRPS) amidates the carboxyl end of the polyketide with the leucine precursor. Because phmA lacks a designated enoylreductase (ER) domain, the required activity is provided the enoyl reductase phmE. Reduction by the hydrolyase phmG, followed by dehydration and intra-molecular Diels-Alder cyclization by the Diels-Alderase phmD then yield the required isoindolone-fused macrocycle. A number of oxidative steps catalyzed by the tailoring cytochrome P450 monooxygenase phmB, the FAD-linked oxidoreductase phmC and the short-chain dehydrogenase/reductase phmF, are further required to afford the final products, phomacin D and phomacin E. The protein is Trans-enoyl reductase phmE of Phaeosphaeria nodorum (strain SN15 / ATCC MYA-4574 / FGSC 10173) (Glume blotch fungus).